Reading from the N-terminus, the 428-residue chain is ATP-dependent RNA helicase RhlB (428 aa).

Positions Gln9–Ala37 match the Q motif motif. The Helicase ATP-binding domain occupies Leu40–Val219. Ala53 to Thr60 contacts ATP. The DEAD box signature appears at Asp165 to Asp168. The Helicase C-terminal domain maps to Arg245–Leu390. A disordered region spans residues Asp392–Gly428. Low complexity predominate over residues Pro408–Arg421.

Belongs to the DEAD box helicase family. RhlB subfamily. In terms of assembly, component of the RNA degradosome, which is a multiprotein complex involved in RNA processing and mRNA degradation.

The protein localises to the cytoplasm. The enzyme catalyses ATP + H2O = ADP + phosphate + H(+). Functionally, DEAD-box RNA helicase involved in RNA degradation. Has RNA-dependent ATPase activity and unwinds double-stranded RNA. In Serratia proteamaculans (strain 568), this protein is ATP-dependent RNA helicase RhlB.